The following is a 1156-amino-acid chain: Nuclear pore complex protein Nup133 (1156 aa).

At M1 the chain carries N-acetylmethionine. Residues 1-39 are disordered; the sequence is MFPAAPSPRTPGTGSRRGPLAGLGPGSTPRTASRKGLPL. A phosphoserine mark is found at S7 and S15. Residue R17 is modified to Omega-N-methylarginine. Phosphoserine is present on S27. Residue T28 is modified to Phosphothreonine. Position 30 is an omega-N-methylarginine (R30). S41, S45, S50, S72, S131, S480, S489, S493, S501, and S755 each carry phosphoserine. K787 is subject to N6-acetyllysine. S1133 is modified (phosphoserine).

This sequence belongs to the nucleoporin Nup133 family. As to quaternary structure, forms part of the Nup160 subcomplex in the nuclear pore which is composed of NUP160, NUP133, NUP107 and Nup96. This complex plays a role in RNA export and in tethering Nup98 and NUP153 to the nucleus. As to expression, widely expressed in fetal and adult tissues. Expressed in the brain and kidney.

Its subcellular location is the nucleus. The protein localises to the nuclear pore complex. The protein resides in the chromosome. It localises to the centromere. It is found in the kinetochore. In terms of biological role, involved in poly(A)+ RNA transport. Involved in nephrogenesis. The protein is Nuclear pore complex protein Nup133 (NUP133) of Homo sapiens (Human).